Consider the following 387-residue polypeptide: MEQPGQDPTSDDVMDSFLEKFQSQPYRGGFHEDQWEKEFEKVPLFMSRAPSEIDPRENPDLACLQSIIFDEERSPEEQAKTYKDEGNDYFKEKDYKKAVISYTEGLKKKCADPDLNAVLYTNRAAAQYYLGNFRSALNDVTAARKLKPCHLKAIIRGALCHLELKHFAEAVNWCDEGLQIDAKEKKLLEMRAKADKLKRIEQRDVRKANLKEKKERNQNEALLQAIKARNIRLSEAACEDEDSASEGLGELFLDGLSTENPHGARLSLDGQGRLSWPVLFLYPEYAQSDFISAFHEDSRFIDHLMVMFGETPSWDLEQKYCPDNLEVYFEDEDRAELYRVPAKSTLLQVLQHQRYFVKALTPAFLVCVGSSPFCKNFLRGRKVYQIR.

The residue at position 1 (Met-1) is an N-acetylmethionine. Residues Ser-47 and Ser-51 each carry the phosphoserine modification. TPR repeat units follow at residues 79 to 112, 117 to 150, and 151 to 184; these read AKTYKDEGNDYFKEKDYKKAVISYTEGLKKKCAD, AVLYTNRAAAQYYLGNFRSALNDVTAARKLKPCH, and LKAIIRGALCHLELKHFAEAVNWCDEGLQIDAKE. Ser-243 carries the phosphoserine modification.

This sequence belongs to the TTC4 family. Interacts (via TPR repeats) with HSP90AB1. Interacts with HSPA8 and CDC6. Interacts with TBK1. Interacts with MSL1. Highly expressed in proliferating tissue and tumor cell lines but not in normal cell lines.

The protein localises to the nucleus. It is found in the nucleoplasm. It localises to the cytoplasm. Functionally, may act as a co-chaperone for HSP90AB1. Promotes Sendai virus (SeV)-induced host cell innate immune responses. This is Tetratricopeptide repeat protein 4 (TTC4) from Homo sapiens (Human).